A 334-amino-acid polypeptide reads, in one-letter code: Cathepsin J (334 aa).

The first 17 residues, 1–17 (MTPTVLLLILCFGVASG), serve as a signal peptide directing secretion. Positions 18 to 113 (AQAHDPKLDA…PHAQNHVSIG (96 aa)) are cleaved as a propeptide — activation peptide. N-linked (GlcNAc...) asparagine glycosylation occurs at asparagine 72. 2 disulfides stabilise this stretch: cysteine 135-cysteine 178 and cysteine 169-cysteine 211. Cysteine 138 is a catalytic residue. Asparagine 217, asparagine 221, and asparagine 268 each carry an N-linked (GlcNAc...) asparagine glycan. Cysteines 269 and 322 form a disulfide. Active-site residues include histidine 276 and asparagine 300.

It belongs to the peptidase C1 family. As to expression, expressed specifically in placenta.

The protein localises to the lysosome. The sequence is that of Cathepsin J (Ctsj) from Mus musculus (Mouse).